The chain runs to 147 residues: UPF0178 protein Tgr7_2584 (147 aa).

This sequence belongs to the UPF0178 family.

The sequence is that of UPF0178 protein Tgr7_2584 from Thioalkalivibrio sulfidiphilus (strain HL-EbGR7).